Reading from the N-terminus, the 494-residue chain is Tripartite motif-containing protein 5 (494 aa).

The residue at position 2 (Ala-2) is an N-acetylalanine. Residues 15 to 59 (CPICLELLTEPLSLDCGHSFCQACITANHKESTLHQGERSCPLCR) form an RING-type zinc finger. Ser-86 carries the phosphoserine modification. A B box-type zinc finger spans residues 91–132 (QKVDHCARHGEKLLLFCQQDGNVICWLCERSQEHRGHHTFLV). 4 residues coordinate Zn(2+): Cys-96, His-99, Cys-118, and His-124. Residues 132-223 (VEEVAEKYQG…RLVQSESDMV (92 aa)) adopt a coiled-coil conformation. A required for interaction with GABARAP and for autophagy region spans residues 186-199 (FKQLRDILDCEESK). A B30.2/SPRY domain is found at 280 to 494 (PDLKGMLQAF…LPMTLCSPSS (215 aa)).

Belongs to the TRIM/RBCC family. Can form homodimers and homotrimers. In addition to lower-order dimerization, also exhibits a higher-order multimerization and both low- and high-order multimerizations are essential for its restriction activity. Interacts with BTBD1 and BTBD2. Interacts with PSMC4, PSMC5, PSMD7 and HSPA8/HSC70. Interacts (via B30.2/SPRY domain) with HSPA1A/B. Interacts with PSMC2, MAP3K7/TAK1, TAB2 and TAB3. Interacts with SQSTM1. Interacts with TRIM6 and TRIM34. Interacts with ULK1 (phosphorylated form), GABARAP, GABARAPL1, GABARAPL2, MAP1LC3A, MAP1LC3C and BECN1. Degraded in a proteasome-independent fashion in the absence of viral infection but in a proteasome-dependent fashion following exposure to restriction sensitive virus. In terms of processing, autoubiquitinated in a RING finger- and UBE2D2-dependent manner. Monoubiquitinated by TRIM21. Deubiquitinated by Yersinia YopJ. Ubiquitination may not lead to proteasomal degradation.

Its subcellular location is the cytoplasm. The protein localises to the nucleus. It catalyses the reaction S-ubiquitinyl-[E2 ubiquitin-conjugating enzyme]-L-cysteine + [acceptor protein]-L-lysine = [E2 ubiquitin-conjugating enzyme]-L-cysteine + N(6)-ubiquitinyl-[acceptor protein]-L-lysine.. Its pathway is protein modification; protein ubiquitination. Its function is as follows. Capsid-specific restriction factor that prevents infection from non-host-adapted retroviruses. Blocks viral replication early in the life cycle, after viral entry but before reverse transcription. In addition to acting as a capsid-specific restriction factor, also acts as a pattern recognition receptor that activates innate immune signaling in response to the retroviral capsid lattice. Binding to the viral capsid triggers its E3 ubiquitin ligase activity, and in concert with the heterodimeric ubiquitin conjugating enzyme complex UBE2V1-UBE2N (also known as UBC13-UEV1A complex) generates 'Lys-63'-linked polyubiquitin chains, which in turn are catalysts in the autophosphorylation of the MAP3K7/TAK1 complex (includes TAK1, TAB2, and TAB3). Activation of the MAP3K7/TAK1 complex by autophosphorylation results in the induction and expression of NF-kappa-B and MAPK-responsive inflammatory genes, thereby leading to an innate immune response in the infected cell. Plays a role in regulating autophagy through activation of autophagy regulator BECN1 by causing its dissociation from its inhibitors BCL2 and TAB2. The protein is Tripartite motif-containing protein 5 (TRIM5) of Cebuella pygmaea (Pygmy marmoset).